A 126-amino-acid chain; its full sequence is MLTDPIADMLTRIRNAHLALHKEVSVPRSKIKESIAAILKQEGYIEDVATEEAEIKISLKYFKGKPVISGLKRVSKPGRRVYVGSTDIPKVQNGLGICILSTSSGVLAGTQARDRKVGGELLCEIW.

This sequence belongs to the universal ribosomal protein uS8 family. In terms of assembly, part of the 30S ribosomal subunit. Contacts proteins S5 and S12.

One of the primary rRNA binding proteins, it binds directly to 16S rRNA central domain where it helps coordinate assembly of the platform of the 30S subunit. This Nitratidesulfovibrio vulgaris (strain DSM 19637 / Miyazaki F) (Desulfovibrio vulgaris) protein is Small ribosomal subunit protein uS8.